Reading from the N-terminus, the 217-residue chain is Somatotropin (217 aa).

Positions 1–27 are cleaved as a signal peptide; it reads MMAAGPRTSLLLAFTLLCLPWTQVVGA. Histidine 46 is a Zn(2+) binding site. An intrachain disulfide couples cysteine 79 to cysteine 190. Serine 132 carries the post-translational modification Phosphoserine. A Zn(2+)-binding site is contributed by glutamate 199. Cysteine 207 and cysteine 215 form a disulfide bridge.

This sequence belongs to the somatotropin/prolactin family.

The protein resides in the secreted. Its function is as follows. Plays an important role in growth control. Its major role in stimulating body growth is to stimulate the liver and other tissues to secrete IGF1. It stimulates both the differentiation and proliferation of myoblasts. It also stimulates amino acid uptake and protein synthesis in muscle and other tissues. The chain is Somatotropin (GH1) from Capra hircus (Goat).